The primary structure comprises 134 residues: Nif-regulating protein A (134 aa).

Residues 3 to 36 (CLECGLVYIVSGLKVPEKISVRVFVNRIEHPFTH) form a C4-type; atypical zinc finger.

Interacts with the general archaeal transcription factors TBPs.

Its function is as follows. Involved in nitrogen regulation. Enhances the transcription of the nitrogen fixation (nif) operon under nitrogen-limited conditions. Acts by binding to the nifH promoter region. The chain is Nif-regulating protein A from Methanosarcina mazei (strain ATCC BAA-159 / DSM 3647 / Goe1 / Go1 / JCM 11833 / OCM 88) (Methanosarcina frisia).